We begin with the raw amino-acid sequence, 161 residues long: Nucleotide-binding protein BamMC406_2474 (161 aa).

This sequence belongs to the YajQ family.

Its function is as follows. Nucleotide-binding protein. This Burkholderia ambifaria (strain MC40-6) protein is Nucleotide-binding protein BamMC406_2474.